Reading from the N-terminus, the 210-residue chain is Vacuolar protein sorting-associated protein 28 homolog 2 (210 aa).

The region spanning 1-99 (MMEVKLWNDK…VTSGLPATVE (99 aa)) is the VPS28 N-terminal domain. A VPS28 C-terminal domain is found at 109–205 (SNSASIVAEC…SSYNSFMAAL (97 aa)).

It belongs to the VPS28 family. Component of the endosomal sorting required for transport complex I (ESCRT-I), composed of ELC, VPS28 and VPS37. Interacts with ELC.

The protein localises to the endosome. Functionally, component of the ESCRT-I complex (endosomal sorting complex required for transport I), a regulator of vesicular trafficking process. Required for the sorting of endocytic ubiquitinated cargos into multivesicular bodies (MVBs). Mediates the association to the ESCRT-0 complex. The chain is Vacuolar protein sorting-associated protein 28 homolog 2 (VPS28-2) from Arabidopsis thaliana (Mouse-ear cress).